A 1140-amino-acid polypeptide reads, in one-letter code: GPI inositol-deacylase (1140 aa).

The disordered stretch occupies residues 1–84; the sequence is MHRRSSGSSP…TTWASHDPPR (84 aa). The span at 55–78 shows a compositional bias: polar residues; it reads GKSTPRSRNSSTWRTLSSATTTWA. The N-linked (GlcNAc...) asparagine glycan is linked to Asn-63. Residues 117–137 form a helical membrane-spanning segment; sequence SCSILTALTTILACVFLFSIV. Ser-304 is an active-site residue. A helical transmembrane segment spans residues 782–802; the sequence is LVMRYRTVFAAFPLLVVSLTL. Residue Asn-862 is glycosylated (N-linked (GlcNAc...) asparagine). Transmembrane regions (helical) follow at residues 882-902, 905-925, 952-972, 1002-1022, 1039-1059, 1070-1090, and 1094-1114; these read AFFW…CVLL, VALI…SKSG, VLLV…VACI, SVFI…LVWA, VLSI…SMIP, SVLL…YAYI, and LVNI…GFSL.

It belongs to the GPI inositol-deacylase family.

The protein localises to the endoplasmic reticulum membrane. Functionally, involved in inositol deacylation of GPI-anchored proteins which plays important roles in the quality control and ER-associated degradation of GPI-anchored proteins. This Emericella nidulans (strain FGSC A4 / ATCC 38163 / CBS 112.46 / NRRL 194 / M139) (Aspergillus nidulans) protein is GPI inositol-deacylase (bst1).